A 136-amino-acid polypeptide reads, in one-letter code: MLQPKRMKFRKMFKGRNRGLANGTEVSFGEFGLKAVGRGRLTARQIEAARRAMTRHIKRQGQIWIRVFPDKPITSKPLEVRMGKGKGNVEYWVCQIQPGKVLYEMNGVSEELAREAFTLAAAKLPLKTTFVTKTVM.

Belongs to the universal ribosomal protein uL16 family. As to quaternary structure, part of the 50S ribosomal subunit.

In terms of biological role, binds 23S rRNA and is also seen to make contacts with the A and possibly P site tRNAs. The protein is Large ribosomal subunit protein uL16 of Shewanella halifaxensis (strain HAW-EB4).